The primary structure comprises 351 residues: SH3 domain-containing protein 3 (351 aa).

Coiled-coil stretches lie at residues 1 to 21 (MDAF…QQLA) and 193 to 213 (LQLA…LGKE). The 237-residue stretch at 31–267 (YESSDVMVID…MVTEKQHKES (237 aa)) folds into the BAR domain. The 60-residue stretch at 281-340 (TSYFLAEVIHPFSAASEKELDLDKGDYIVVRKVSQTGWAEGECKGKAGWFPMAYIEKRQR) folds into the SH3 domain.

As to quaternary structure, interacts with FREE1. Interacts (via SH3 domain) with DRP2A/ADL6. Binds to SH3P2. As to expression, detected in all tissues except seedlings.

The protein resides in the cytoplasmic vesicle. It localises to the clathrin-coated vesicle. In terms of biological role, may be involved in the recruitment of DRP2A to the accessory protein complex and in the negative regulation of its GTPase activity. The chain is SH3 domain-containing protein 3 from Arabidopsis thaliana (Mouse-ear cress).